Consider the following 219-residue polypeptide: 3,4-dihydroxy-2-butanone 4-phosphate synthase (219 aa).

Residues R28 to E29, D33, R140 to T144, and E164 contribute to the D-ribulose 5-phosphate site. E29 lines the Mg(2+) pocket. Mg(2+) is bound at residue H143.

It belongs to the DHBP synthase family. As to quaternary structure, homodimer. The cofactor is Mg(2+). It depends on Mn(2+) as a cofactor.

It carries out the reaction D-ribulose 5-phosphate = (2S)-2-hydroxy-3-oxobutyl phosphate + formate + H(+). It participates in cofactor biosynthesis; riboflavin biosynthesis; 2-hydroxy-3-oxobutyl phosphate from D-ribulose 5-phosphate: step 1/1. Functionally, catalyzes the conversion of D-ribulose 5-phosphate to formate and 3,4-dihydroxy-2-butanone 4-phosphate. The protein is 3,4-dihydroxy-2-butanone 4-phosphate synthase of Methanocorpusculum labreanum (strain ATCC 43576 / DSM 4855 / Z).